Here is a 591-residue protein sequence, read N- to C-terminus: CDK5RAP3 protein homolog (591 aa).

Residues 232–250 (RAGAPSSAKGPASSASAPP) show a composition bias toward low complexity. Disordered stretches follow at residues 232 to 252 (RAGA…PPAL) and 269 to 303 (TAPP…DAGG). The span at 279–303 (AGAGASGQGGGIEIDWGDSGGDAGG) shows a compositional bias: gly residues. 3 short sequence motifs (shuffled ATG8-binding motif) span residues 311–314 (IDWD), 334–337 (INWD), and 369–372 (IDWD). Over residues 386–401 (NNRAGDVAEGEAAASL) the composition is skewed to low complexity. The interval 386–416 (NNRAGDVAEGEAAASLSGGGGGGASSGDPDD) is disordered.

The protein belongs to the CDK5RAP3 family. Substrate adapter component of the UFM1 ribosome E3 ligase (UREL) complex. Interacts with ATG8 family proteins.

In terms of biological role, substrate adapter of E3 ligase complexes mediating ufmylation, the covalent attachment of the ubiquitin-like modifier UFM1 to substrate proteins, and which is involved in various processes, such as ribosome recycling and reticulophagy (also called ER-phagy). The sequence is that of CDK5RAP3 protein homolog from Chlamydomonas reinhardtii (Chlamydomonas smithii).